The chain runs to 201 residues: uncharacterized protein (201 aa).

This is an uncharacterized protein from Lepidoptera (butterflies and moths).